The chain runs to 151 residues: FUN14 domain-containing protein 1A (151 aa).

A YXXL motif is present at residues 14–17 (YEVL). The next 3 helical transmembrane spans lie at 44-64 (YSVA…GFLF), 71-91 (AATA…GGYI), and 130-150 (FVKK…LGLA).

This sequence belongs to the FUN14 family.

The protein resides in the mitochondrion outer membrane. Functionally, acts as an activator of hypoxia-induced mitophagy, an important mechanism for mitochondrial quality control. The chain is FUN14 domain-containing protein 1A (fundc1-a) from Xenopus laevis (African clawed frog).